The primary structure comprises 256 residues: Osteocalcin 2 (256 aa).

Positions 1–18 (MKTLVLLSICALLSVCWS) are cleaved as a signal peptide. Residues 19–209 (MGAVEPEVVV…LASVLLRRRR (191 aa)) constitute a propeptide that is removed on maturation. Over residues 38 to 186 (AAPADPAAAA…SSSSSSSSES (149 aa)) the composition is skewed to low complexity. Residues 38 to 193 (AAPADPAAAA…SESASDEAAK (156 aa)) form a disordered region. The region spanning 218 to 252 (PLQLESLREVCELNIACDEMAETAGIVAAYVAYYG) is the Gla domain. Ca(2+)-binding residues include glutamate 222, glutamate 226, glutamate 229, and aspartate 235. 4-carboxyglutamate occurs at positions 222, 226, and 229. An intrachain disulfide couples cysteine 228 to cysteine 234. A 4-carboxyglutamate modification is found at glutamate 236.

This sequence belongs to the osteocalcin/matrix Gla protein family. Post-translationally, gamma-carboxyglutamate residues are formed by vitamin K dependent carboxylation by GGCX. These residues are essential for the binding of calcium.

The protein resides in the secreted. The carboxylated form is one of the main organic components of the bone matrix, which constitutes 1-2% of the total bone protein. The carboxylated form binds strongly to apatite and calcium. In Diplodus sargus (White seabream), this protein is Osteocalcin 2.